The following is a 237-amino-acid chain: MPAEGSLAQEFVQFAVESGVLRFGQFKTKAGRMSPYFFNAGLFDDGAKLGRLAQFYARQLLAEEQRSGLAFDMIFGPAYKGIPLAAAVAIELARLGRNLPFAYNRKEAKDHGEGGTLVGAKLQGRVLIVDDVMSAGTAVRESIALIQAAGATPHAVAIALDRQEKATENGLDVEHSAVQYVTRQLGLQVCAIARLSDLLQYLSEKSDSPSGGETLDGQRLKDHYQSVLAYRERYGVN.

Residue K29 coordinates 5-phospho-alpha-D-ribose 1-diphosphate. An orotate-binding site is contributed by 37–38 (FF). 5-phospho-alpha-D-ribose 1-diphosphate-binding positions include 79–80 (YK), R105, K106, K109, H111, and 130–138 (DDVMSAGTA). Orotate-binding residues include S134 and R162.

It belongs to the purine/pyrimidine phosphoribosyltransferase family. PyrE subfamily. In terms of assembly, homodimer. Requires Mg(2+) as cofactor.

It catalyses the reaction orotidine 5'-phosphate + diphosphate = orotate + 5-phospho-alpha-D-ribose 1-diphosphate. Its pathway is pyrimidine metabolism; UMP biosynthesis via de novo pathway; UMP from orotate: step 1/2. Catalyzes the transfer of a ribosyl phosphate group from 5-phosphoribose 1-diphosphate to orotate, leading to the formation of orotidine monophosphate (OMP). The chain is Orotate phosphoribosyltransferase from Polaromonas naphthalenivorans (strain CJ2).